A 386-amino-acid chain; its full sequence is Delta(7)-sterol 5(6)-desaturase (386 aa).

3 helical membrane-spanning segments follow: residues 119–139 (VLSL…IVAY), 172–192 (IPVM…GYSF), and 206–226 (AILW…YFLH). Residues 214–337 (FILFTDCGIY…FTTLWDRLGN (124 aa)) form the Fatty acid hydroxylase domain. The Histidine box-1 signature appears at 226–230 (HRWLH). Positions 239-243 (HKPHH) match the Histidine box-2 motif. A helical transmembrane segment spans residues 272–292 (PLLFPLHKVLYLLLFTFVNFW). The short motif at 314–318 (HTVHH) is the Histidine box-3 element.

Belongs to the sterol desaturase family. Fe cation serves as cofactor.

The protein resides in the endoplasmic reticulum membrane. The enzyme catalyses a Delta(7)-sterol + 2 Fe(II)-[cytochrome b5] + O2 + 2 H(+) = a Delta(5),Delta(7)-sterol + 2 Fe(III)-[cytochrome b5] + 2 H2O. Its pathway is steroid metabolism; ergosterol biosynthesis; ergosterol from zymosterol: step 3/5. Functionally, catalyzes the introduction of a C-5 double bond in the B ring of ergosterol. May contribute to the regulation of ergosterol biosynthesis. This Candida dubliniensis (strain CD36 / ATCC MYA-646 / CBS 7987 / NCPF 3949 / NRRL Y-17841) (Yeast) protein is Delta(7)-sterol 5(6)-desaturase (ERG3).